Reading from the N-terminus, the 644-residue chain is MISSISLSQDKCKYLLYNNLLVDERENFLVSLTCSYILFQKTIPYIQNVSTLYDKVWDDHVIDQQEDGTCLIYIDRHLVHEVTSPQAFEGLRNANRPVRRPDCTLATVDHNIPTTTRKIFKNITTFIKEADSRTQCETLEQNIEAFGLTYFGMEDSRQGIVHVIGPEQGFTLPATTVVCGDSHTSTHGAFGALAFGIGTSEVEHVLATQTLLQKKSKNMRIRVQGKALPGVTSKDIVLHIIGVIGTAGGTGCVIEFCGDTIAALSMESRMSICNMSIEAGARAGMVAPDEVTFEYLRDKPLAPKGADWDRAVKYWKSLSSDADAKYDINVEINAADIAPTLTWGTSPQDVVPITGSTPDPAKIEDPIRRSAVQRALDYIGIAPNTPMEGVKVDKVFIGSCTNSRIEDLRAAAAVVKGKRAAEWVDAMVVPGSGLVKRQAEREGLDKIFTDAGFDWREAGCSMCLGMNPDQLKPGERCASTSNRNFEGRQGAGGRTHLVSPAMAAAAGIKGCLTDVRNMEVSEIPGTPKQSPRQEVVAEFESEEDDVDSSSVDSAPVATPPSTGDSAGMPKFTTLKGYAAPLDISNVDTDMIIPKQFLKTIKRTGLGSALFYALRFDPATGAENPDFVLNLRALPSRTYLGLHRS.

Cysteine 400, cysteine 460, and cysteine 463 together coordinate [4Fe-4S] cluster. The tract at residues serine 521–methionine 568 is disordered. A compositionally biased stretch (acidic residues) spans alanine 537–aspartate 547.

It belongs to the aconitase/IPM isomerase family. In terms of assembly, monomer. Requires [4Fe-4S] cluster as cofactor.

The enzyme catalyses (2R,3S)-3-isopropylmalate = (2S)-2-isopropylmalate. The protein operates within amino-acid biosynthesis; L-leucine biosynthesis; L-leucine from 3-methyl-2-oxobutanoate: step 2/4. Functionally, catalyzes the isomerization between 2-isopropylmalate and 3-isopropylmalate, via the formation of 2-isopropylmaleate. The protein is 3-isopropylmalate dehydratase (LEUA) of Mucor circinelloides f. lusitanicus (Mucor racemosus var. lusitanicus).